The following is a 142-amino-acid chain: COMPASS component SHG1 (142 aa).

The protein belongs to the SHG1 family. Component of the Set1C/COMPASS complex which consists of SET1(2), BRE2(2), SPP1(2), SDC1(1), SHG1(1), SWD1(1), SWD2(1), and SWD3(1).

The protein resides in the nucleus. In terms of biological role, the COMPASS (Set1C) complex specifically mono-, di- and trimethylates histone H3 to form H3K4me1/2/3, which subsequently plays a role in telomere length maintenance and transcription elongation regulation. This chain is COMPASS component SHG1 (SHG1), found in Saccharomyces cerevisiae (strain ATCC 204508 / S288c) (Baker's yeast).